The chain runs to 553 residues: Methyl-coenzyme M reductase II subunit alpha (553 aa).

Residue Q150 participates in coenzyme F430 binding. Coenzyme B-binding positions include R228, 259–260, and R273; that span reads KH. Pros-methylhistidine is present on H260. A 5-methylarginine modification is found at R274. A coenzyme M-binding site is contributed by Y335. Q402 carries the 2-methylglutamine modification. Y446 provides a ligand contact to coenzyme M. G447 carries the 1-thioglycine modification. (Z)-2,3-didehydroaspartate is present on D452. Residue C454 is modified to S-methylcysteine.

It belongs to the methyl-coenzyme M reductase alpha subunit family. In terms of assembly, MCR is a hexamer of two alpha, two beta, and two gamma chains, forming a dimer of heterotrimers. Coenzyme F430 serves as cofactor. In terms of processing, the alpha subunit contains six modified amino acids near the active site region. Is methylated on His-260, Arg-274, Gln-402 and Cys-454, probably by the action of specific S-adenosylmethionine-dependent methyltransferases. Also contains a thioglycine at position 447, forming a thiopeptide bond. Contains a didehydroaspartate residue at position 452. The methylation on C5 of Arg-274 is a post-translational methylation not essential in vivo, but which plays a role for the stability and structural integrity of MCR.

The enzyme catalyses coenzyme B + methyl-coenzyme M = methane + coenzyme M-coenzyme B heterodisulfide. Its pathway is one-carbon metabolism; methyl-coenzyme M reduction; methane from methyl-coenzyme M: step 1/1. In terms of biological role, component of the methyl-coenzyme M reductase (MCR) I that catalyzes the reductive cleavage of methyl-coenzyme M (CoM-S-CH3 or 2-(methylthio)ethanesulfonate) using coenzyme B (CoB or 7-mercaptoheptanoylthreonine phosphate) as reductant which results in the production of methane and the mixed heterodisulfide of CoB and CoM (CoM-S-S-CoB). This is the final step in methanogenesis. The protein is Methyl-coenzyme M reductase II subunit alpha (mrtA) of Methanothermobacter marburgensis (strain ATCC BAA-927 / DSM 2133 / JCM 14651 / NBRC 100331 / OCM 82 / Marburg) (Methanobacterium thermoautotrophicum).